Consider the following 341-residue polypeptide: ATPase GET3 (341 aa).

34–41 (KGGVGKTT) contacts ATP. The active site involves D63. Positions 245 and 272 each coordinate ATP. Residues C283 and C286 each contribute to the Zn(2+) site.

The protein belongs to the arsA ATPase family. In terms of assembly, homodimer.

It localises to the cytoplasm. The protein resides in the endoplasmic reticulum. Functionally, ATPase required for the post-translational delivery of tail-anchored (TA) proteins to the endoplasmic reticulum. Recognizes and selectively binds the transmembrane domain of TA proteins in the cytosol. This complex then targets to the endoplasmic reticulum by membrane-bound receptors, where the tail-anchored protein is released for insertion. This process is regulated by ATP binding and hydrolysis. ATP binding drives the homodimer towards the closed dimer state, facilitating recognition of newly synthesized TA membrane proteins. ATP hydrolysis is required for insertion. Subsequently, the homodimer reverts towards the open dimer state, lowering its affinity for the membrane-bound receptor, and returning it to the cytosol to initiate a new round of targeting. This Ajellomyces capsulatus (strain H143) (Darling's disease fungus) protein is ATPase GET3.